Consider the following 260-residue polypeptide: Type II methyltransferase M1.MboII (260 aa).

S-adenosyl-L-methionine is bound by residues C12, D30, K197, 223–225 (SGT), and 241–242 (DM).

Belongs to the N(4)/N(6)-methyltransferase family. In terms of assembly, at low concentration exists as a monomer and homodimer. Probably binds to DNA as a monomer.

It carries out the reaction a 2'-deoxyadenosine in DNA + S-adenosyl-L-methionine = an N(6)-methyl-2'-deoxyadenosine in DNA + S-adenosyl-L-homocysteine + H(+). Its function is as follows. A beta subtype methylase that recognizes the double-stranded sequence 5'-GAAGA-3', methylates A-5 on the top strand, and protects the DNA from cleavage by the MboII endonuclease. It is not known if the cytosine of the complementary sequence TCTTC is also methylated by this enzyme. The chain is Type II methyltransferase M1.MboII from Moraxella bovis.